The sequence spans 379 residues: MGFAPLLVFSLFVFAGTTKGFICSFDSIYQLGDSFSDTGNLIRQPPDGPTFCSAHFPYGETFPGMPTGRCSDGRLIIDFIATALNLPLLNPYLQQNVSFRHGVNFAVGGATALDLSFLAARGVQVYDVHSPLSTQLKWFRTYLGSICSSPKECSNKLKNALFILGNIGNNDVNYAFPNRSIEEIRAYLPFITEAVANATREIIRLGGTRVIVPGMFPLGCLARNLYFFPDGDKDDLGCLSSLNDLSIYFNSLIQQALASLRIEFPQAVIIYADYYNAWGFLFRNGPALGFNSTTMLKCCCGIGGPYNYDPDRECASQGVPVCSNPTEYIQWDGTHFTQAAYRRVAEYIIPDIIKELKCSYSSIQHLTEGREALHINERE.

The first 20 residues, 1 to 20 (MGFAPLLVFSLFVFAGTTKG), serve as a signal peptide directing secretion. Catalysis depends on S34, which acts as the Nucleophile. N-linked (GlcNAc...) asparagine glycans are attached at residues N96, N178, N197, and N291. Catalysis depends on residues D332 and H335.

The protein belongs to the 'GDSL' lipolytic enzyme family. Expressed in roots and leaves at low levels.

The enzyme catalyses 17-O-acetylnorajmaline + H2O = norajmaline + acetate + H(+). It catalyses the reaction 17-O-acetylajmaline + H2O = ajmaline + acetate + H(+). The protein operates within alkaloid biosynthesis; ajmaline biosynthesis. In terms of biological role, acetylesterase involved in the biosynthesis of ajmaline-type monoterpenoid indole alkaloids (MIAs) natural products, important plant-derived pharmaceuticals used in the therapy of heart disorders. Deacetylates 17-O-acetylnorajmaline to produce norajmaline. May also catalyze the conversion of 17-O-acetylajmaline to ajmaline. The sequence is that of Acetylajmalan esterase 1 from Rauvolfia serpentina (Serpentine wood).